The following is a 61-amino-acid chain: [Val1,Thr6]-bradykinyl-Val,Asp (61 aa).

Residues 1-22 (MAFLKKSLFLVLFLGVVSLSFC) form the signal peptide. Residues 23-48 (EEEEREEHEEEKREAEAAESAENLIS) constitute a propeptide that is removed on maturation. The tract at residues 27-61 (REEHEEEKREAEAAESAENLISKRVPPGFTPFRVD) is disordered.

Expressed by the skin glands. Expression levels in inguinal glands and granular glands are virtually the same.

It is found in the secreted. In terms of biological role, induces contraction of rat ileum smooth muscle (EC(50)=2.73 uM) but has no activity towards rat smooth muscle from tail artery, urinary bladder or uterus. Binds to both bradykinin receptor B1 (BDKRB1) and B2 (BDKRB2); the effect via BDKRB1 is stronger. In Physalaemus nattereri (Cuyaba dwarf frog), this protein is [Val1,Thr6]-bradykinyl-Val,Asp.